The sequence spans 344 residues: Acetylpolyamine amidohydrolase 2 (344 aa).

The active-site Proton donor/acceptor is histidine 159. Zn(2+) is bound by residues aspartate 195, histidine 197, and aspartate 284.

The protein belongs to the histone deacetylase family. In terms of assembly, homodimer. Zn(2+) serves as cofactor.

The enzyme catalyses N-acetylputrescine + H2O = putrescine + acetate. It carries out the reaction N-acetylcadaverine + H2O = cadaverine + acetate. Its pathway is amine and polyamine metabolism. Functionally, catalyzes the deacetylation of acetylated polyamines such as N-acetylputrescine and N-acetylcadaverine. Plays an important role in the metabolism of acetylated polyamines in P.aeruginosa. Is involved in the degradation pathways of N-acetylputrescine and N-acetylcadaverine, that allow P.aeruginosa to utilize these acetylpolyamines as a carbon source under glucose starvation. Shows nearly no activity against N(1)-acetylspermine and N(1)-acetylspermidine. Can also hydrolyze artificial trifluoroacetylated lysine-derivative, and to a lesser extent, acetylated lysine-derivative. In Pseudomonas aeruginosa (strain ATCC 15692 / DSM 22644 / CIP 104116 / JCM 14847 / LMG 12228 / 1C / PRS 101 / PAO1), this protein is Acetylpolyamine amidohydrolase 2.